A 420-amino-acid chain; its full sequence is PHO85 cyclin-6 (420 aa).

Disordered stretches follow at residues 1 to 82 (MSIK…ESSF), 134 to 155 (QGTH…DTSN), and 268 to 321 (VTTT…GVQR). Over residues 7-22 (SPSSTNASSSPKSTYS) the composition is skewed to low complexity. The residue at position 61 (Ser-61) is a Phosphoserine. Residues 134 to 143 (QGTHTVQSST) are compositionally biased toward polar residues. The span at 277–296 (AKHESPSNESSLDKANRGAD) shows a compositional bias: basic and acidic residues. Phosphoserine is present on residues Ser-281 and Ser-312. Acidic residues predominate over residues 307–316 (NENDDSDDEN). Thr-317 is modified (phosphothreonine).

It belongs to the cyclin family. PHO80 subfamily. As to quaternary structure, forms a cyclin-CDK complex with PHO85. Interacts with the substrate protein YJL084C. Interacts with elongin-C, which stabilizes PCL6. Interacts with the CDK inhibitor (CKI) PHO81.

Its subcellular location is the cytoplasm. The protein resides in the nucleus. Its function is as follows. Cyclin partner of the cyclin-dependent kinase (CDK) PHO85. Together with cyclin PCL7, controls glycogen phosphorylase and glycogen synthase activities in response to nutrient availablility. The PCL6-PHO85 cyclin-CDK holoenzyme has GLC8 kinase activity and phosphorylates and inactivates the phosphatase PP1-2 inhibitor GLC8, causing activation of PP1-2, which then dephosphorylates and activates glycogen phosphorylase. PCL6-PHO85 also phosphorylates YJL084C. The polypeptide is PHO85 cyclin-6 (PCL6) (Saccharomyces cerevisiae (strain ATCC 204508 / S288c) (Baker's yeast)).